A 625-amino-acid polypeptide reads, in one-letter code: Autophagy-related protein 13b (625 aa).

Composition is skewed to low complexity over residues 322–332 (PSVSCSPSPTR) and 455–477 (PSGV…SSRS). Disordered stretches follow at residues 322-388 (PSVS…AVPR), 452-527 (FRRP…YPKK), and 544-564 (PPLR…NNNK). Basic and acidic residues predominate over residues 498–518 (ITDRNSRPGSFDHRGDIHEPF).

The protein belongs to the ATG13 family. Plant subfamily.

It localises to the cytoplasmic vesicle. The protein resides in the autophagosome. In terms of biological role, involved in autophagy in a nutritional condition dependent manner. The ATG1-ATG13 protein kinase complex regulates downstream events required for autophagosome enclosure and/or vacuolar delivery. Becomes a target of autophagy under nutrient starvation. Connects autophagy to plant nutritional status. This chain is Autophagy-related protein 13b, found in Arabidopsis thaliana (Mouse-ear cress).